The chain runs to 58 residues: Weak neurotoxin D2B (58 aa).

Disulfide bonds link C3-C24, C17-C41, and C43-C54.

Expressed by the venom gland.

The protein resides in the secreted. Binds to muscle nicotinic acetylcholine receptor (nAChR) and inhibit acetylcholine from binding to the receptor, thereby impairing neuromuscular transmission. The sequence is that of Weak neurotoxin D2B from Micrurus pyrrhocryptus (Coral snake).